The primary structure comprises 369 residues: Molybdenum import ATP-binding protein ModC (369 aa).

An ABC transporter domain is found at 7–243 (PGQAGIHARF…LDLPMAMTDD (237 aa)). ATP is bound at residue 41–48 (GQSGSGKT). In terms of domain architecture, Mop spans 304–369 (EGSILNVLAV…AQIKAVSLLA (66 aa)).

Belongs to the ABC transporter superfamily. Molybdate importer (TC 3.A.1.8) family. The complex is composed of two ATP-binding proteins (ModC), two transmembrane proteins (ModB) and a solute-binding protein (ModA).

Its subcellular location is the cell inner membrane. The enzyme catalyses molybdate(out) + ATP + H2O = molybdate(in) + ADP + phosphate + H(+). Functionally, part of the ABC transporter complex ModABC involved in molybdenum import. Responsible for energy coupling to the transport system. In Bordetella bronchiseptica (strain ATCC BAA-588 / NCTC 13252 / RB50) (Alcaligenes bronchisepticus), this protein is Molybdenum import ATP-binding protein ModC.